The primary structure comprises 558 residues: Dihydroxy-acid dehydratase (558 aa).

Residue D78 coordinates Mg(2+). C119 provides a ligand contact to [2Fe-2S] cluster. Mg(2+)-binding residues include D120 and K121. Position 121 is an N6-carboxylysine (K121). C191 serves as a coordination point for [2Fe-2S] cluster. E443 is a Mg(2+) binding site. The active-site Proton acceptor is the S469.

The protein belongs to the IlvD/Edd family. In terms of assembly, homodimer. Requires [2Fe-2S] cluster as cofactor. Mg(2+) is required as a cofactor.

It catalyses the reaction (2R)-2,3-dihydroxy-3-methylbutanoate = 3-methyl-2-oxobutanoate + H2O. The enzyme catalyses (2R,3R)-2,3-dihydroxy-3-methylpentanoate = (S)-3-methyl-2-oxopentanoate + H2O. The protein operates within amino-acid biosynthesis; L-isoleucine biosynthesis; L-isoleucine from 2-oxobutanoate: step 3/4. It functions in the pathway amino-acid biosynthesis; L-valine biosynthesis; L-valine from pyruvate: step 3/4. Its function is as follows. Functions in the biosynthesis of branched-chain amino acids. Catalyzes the dehydration of (2R,3R)-2,3-dihydroxy-3-methylpentanoate (2,3-dihydroxy-3-methylvalerate) into 2-oxo-3-methylpentanoate (2-oxo-3-methylvalerate) and of (2R)-2,3-dihydroxy-3-methylbutanoate (2,3-dihydroxyisovalerate) into 2-oxo-3-methylbutanoate (2-oxoisovalerate), the penultimate precursor to L-isoleucine and L-valine, respectively. The polypeptide is Dihydroxy-acid dehydratase (Solidesulfovibrio magneticus (strain ATCC 700980 / DSM 13731 / RS-1) (Desulfovibrio magneticus)).